The chain runs to 180 residues: Small ribosomal subunit protein uS5 (180 aa).

Residues 1–20 (MAKMQGRMQGKVAPGDDRGD) are disordered. One can recognise an S5 DRBM domain in the interval 22 to 85 (LKEKMVAINR…DEARRKMIKV (64 aa)).

This sequence belongs to the universal ribosomal protein uS5 family. In terms of assembly, part of the 30S ribosomal subunit. Contacts proteins S4 and S8.

With S4 and S12 plays an important role in translational accuracy. Its function is as follows. Located at the back of the 30S subunit body where it stabilizes the conformation of the head with respect to the body. The polypeptide is Small ribosomal subunit protein uS5 (Nitrosospira multiformis (strain ATCC 25196 / NCIMB 11849 / C 71)).